The sequence spans 210 residues: C4-dicarboxylate TRAP transporter small permease protein DctQ (210 aa).

4 helical membrane passes run 13-33 (EGLI…YVVL), 77-97 (ALFA…AGHL), 113-133 (VLGV…CVAS), and 160-180 (IGLI…EILV).

Belongs to the TRAP transporter small permease family. As to quaternary structure, the complex comprises the extracytoplasmic solute receptor protein DctP, and the two transmembrane proteins DctQ and DctM.

It is found in the cell inner membrane. Part of the tripartite ATP-independent periplasmic (TRAP) transport system DctPQM involved in C4-dicarboxylates uptake. The polypeptide is C4-dicarboxylate TRAP transporter small permease protein DctQ (Pseudomonas aeruginosa (strain ATCC 15692 / DSM 22644 / CIP 104116 / JCM 14847 / LMG 12228 / 1C / PRS 101 / PAO1)).